The following is a 455-amino-acid chain: Protein FAM124B (455 aa).

S49 carries the post-translational modification Phosphoserine. Positions 270 to 322 are disordered; it reads TSVSAKRTSEPRSQRNQGKRSQGHSLELPEPSGSPTSDRCAGTSWKSPGRSFQ. Polar residues predominate over residues 313–322; it reads SWKSPGRSFQ.

It belongs to the FAM124 family. As to quaternary structure, interacts with CHD7 and CHD8.

The protein resides in the nucleus. This Homo sapiens (Human) protein is Protein FAM124B (FAM124B).